The following is a 332-amino-acid chain: Putative peptide import ATP-binding protein BruAb2_1033 (332 aa).

An ABC transporter domain is found at 11–261 (LEVSNLSVDF…PLHPYTEGLL (251 aa)). An ATP-binding site is contributed by 47-54 (GESGSGKS).

It belongs to the ABC transporter superfamily. As to quaternary structure, the complex is composed of two ATP-binding proteins (BruAb2_1033 and BruAb2_1034), two transmembrane proteins (BruAb2_1031 and BruAb2_1032) and a solute-binding protein (BruAb2_1030).

It is found in the cell inner membrane. In terms of biological role, probably part of an ABC transporter complex that could be involved in peptide import. Probably responsible for energy coupling to the transport system. The sequence is that of Putative peptide import ATP-binding protein BruAb2_1033 from Brucella abortus biovar 1 (strain 9-941).